Here is a 181-residue protein sequence, read N- to C-terminus: Cyclic AMP-dependent transcription factor ATF-3 (181 aa).

A disordered region spans residues 76 to 96 (VTKSEVAPEEDERKRRRRERN). Residue Lys78 forms a Glycyl lysine isopeptide (Lys-Gly) (interchain with G-Cter in SUMO2) linkage. The region spanning 86 to 149 (DERKRRRRER…QHLIYMLNLH (64 aa)) is the bZIP domain. The tract at residues 88–110 (RKRRRRERNKIAAAKCRNKKKEK) is basic motif. Residues 114-142 (LQKESEKLESVNAELKAQIEELKNEKQHL) are leucine-zipper. Thr162 is modified (phosphothreonine). Lys175 is covalently cross-linked (Glycyl lysine isopeptide (Lys-Gly) (interchain with G-Cter in SUMO2)).

Belongs to the bZIP family. ATF subfamily. In terms of assembly, ATF3 alone can bind DNA, but it preferentially forms heteromeric complexes with JUN and JUNB and does not interact with FOS. In terms of tissue distribution, expressed in tissues containing skeletal muscle or smooth muscle. Expressed in cutaneous and muscular sensory neurons.

It localises to the nucleus. In terms of biological role, this protein binds the cAMP response element (CRE) (consensus: 5'-GTGACGT[AC][AG]-3'), a sequence present in many viral and cellular promoters. Represses transcription from promoters with ATF sites. It may repress transcription by stabilizing the binding of inhibitory cofactors at the promoter. In Rattus norvegicus (Rat), this protein is Cyclic AMP-dependent transcription factor ATF-3 (Atf3).